The following is a 140-amino-acid chain: Immunity protein RhsIC (140 aa).

Functionally, putative immunity protein component of a toxin-immunity protein module, which may function as a cellular contact-dependent growth inhibition (CDI) system. Blocks the toxic effects of expression of the C-terminus (residues 1519-1658) of cognate toxin RhsC in E.coli. This chain is Immunity protein RhsIC (rhsIC), found in Dickeya dadantii (strain 3937) (Erwinia chrysanthemi (strain 3937)).